We begin with the raw amino-acid sequence, 305 residues long: MDHEEIPSTPSTPATTPGTPGAPLFGGFEGKRNGHNGRYTPKSLLKSCKCFSVDNEWALEDGRLPPVTCSLPPPNVSLYRKLGAEFVGTLILIFAGTATAIVNQKTDGAETLIGCAASAGLAVMIVILSTGHISGAHLNPAVTIAFAALKHFPWKHVPVYIGAQVMASVSAAFALKAVFEPTMSGGVTVPTVGLSQAFALEFIISFNLMFVVTAVATDTRAVGELAGIAVGATVMLNILIAGPATSASMNPVRTLGPAIAANNYRAIWVYLTAPILGALIGAGTYTIVKLPEEDEAPKERRSFRR.

Residues 1 to 30 (MDHEEIPSTPSTPATTPGTPGAPLFGGFEG) form a disordered region. Low complexity predominate over residues 7–23 (PSTPSTPATTPGTPGAP). Helical transmembrane passes span 82–102 (LGAE…TAIV) and 111–131 (TLIG…LSTG). An NPA 1 motif is present at residues 139–141 (NPA). Transmembrane regions (helical) follow at residues 159 to 179 (VYIG…KAVF), 194 to 214 (LSQA…VVTA), and 221 to 241 (AVGE…ILIA). An NPA 2 motif is present at residues 250–252 (NPV). The helical transmembrane segment at 267–287 (IWVYLTAPILGALIGAGTYTI) threads the bilayer. Serine 302 carries the post-translational modification Phosphoserine.

Belongs to the MIP/aquaporin (TC 1.A.8) family. NIP (TC 1.A.8.12) subfamily. In terms of tissue distribution, expressed in roots.

Its subcellular location is the membrane. Functionally, transports glycerol, urea and formamide, in Xenopus laevis oocytes. Very low water transport activity. This Arabidopsis thaliana (Mouse-ear cress) protein is Aquaporin NIP6-1 (NIP6-1).